The following is a 65-amino-acid chain: Adrenergic toxin rho-elapitoxin-Dp1a (65 aa).

Intrachain disulfides connect C3/C24, C17/C42, C46/C57, and C58/C63.

It belongs to the three-finger toxin family. Short-chain subfamily. Aminergic toxin sub-subfamily. As to expression, expressed by the venom gland.

Its subcellular location is the secreted. This toxin shows activities on different G-protein coupled receptors. It is highly potent on various alpha-adrenoceptors (ADRA) (subnanomolar affinity for ADRA1A). Order of potency is the following: ADRA1A &gt; ADRA1B &gt; ADRA1D &gt; ADRA2C. It is also found to reversibly bind to muscarinic acetylcholine receptors (CHRM), but the affinity is much weaker (CHRM1 and CHRM2, Ki&gt;1 uM; CHRM3, Ki=140 nM; CHRM4, Ki=120 nM; CHRM5, Ki=350 nM). In Dendroaspis polylepis polylepis (Black mamba), this protein is Adrenergic toxin rho-elapitoxin-Dp1a.